An 884-amino-acid chain; its full sequence is Valine--tRNA ligase (884 aa).

Residues 46–56 (PNVTGKLHLGH) carry the 'HIGH' region motif. The 'KMSKS' region signature appears at 520-524 (KMSKS). Lysine 523 contributes to the ATP binding site. A coiled-coil region spans residues 809 to 844 (LADLLNVEEELARLEKELAKWQKELNMVGKKLSNER).

This sequence belongs to the class-I aminoacyl-tRNA synthetase family. ValS type 1 subfamily. As to quaternary structure, monomer.

The protein localises to the cytoplasm. The enzyme catalyses tRNA(Val) + L-valine + ATP = L-valyl-tRNA(Val) + AMP + diphosphate. Catalyzes the attachment of valine to tRNA(Val). As ValRS can inadvertently accommodate and process structurally similar amino acids such as threonine, to avoid such errors, it has a 'posttransfer' editing activity that hydrolyzes mischarged Thr-tRNA(Val) in a tRNA-dependent manner. In Streptococcus agalactiae serotype III (strain NEM316), this protein is Valine--tRNA ligase.